The primary structure comprises 141 residues: Large-conductance mechanosensitive channel (141 aa).

A run of 2 helical transmembrane segments spans residues 16–36 (VIDLAVGVIIGAAFGKIVDSL) and 86–106 (GNFITVAVNFLILAFIVFLMV).

This sequence belongs to the MscL family. In terms of assembly, homopentamer.

The protein resides in the cell inner membrane. In terms of biological role, channel that opens in response to stretch forces in the membrane lipid bilayer. May participate in the regulation of osmotic pressure changes within the cell. The sequence is that of Large-conductance mechanosensitive channel from Ralstonia nicotianae (strain ATCC BAA-1114 / GMI1000) (Ralstonia solanacearum).